A 1295-amino-acid polypeptide reads, in one-letter code: MMEILRGSPALSAFRINKLLARFQAANLQVHNIYAEYVHFADLNAPLNDSEQAQLTRLLQYGPALSSHTLAGKLLLVTPRPGTISPWSSKATDIAHNCGLQQIDRLERGVAYYIEASTLTAEQWRQVAAELHDRMMETVFSSLTDAEKLFIHHQPAPVSSVDLLGEGRQALIDANLRLGLALAEDEIDYLQEAFTKLGRNPNDIELYMFAQANSEHCRHKIFNADWIIDGKPQPKSLFKMIKNTFETTPDYVLSAYKDNAAVMEGSAVGRYFADHNTGRYDFHQEPAHILMKVETHNHPTAISPWPGAATGSGGEIRDEGATGRGAKPKAGLVGFSVSNLRIPGFEQPWEEDFGKPERIVTALDIMTEGPLGGAAFNNEFGRPALTGYFRTYEEKVNSHNGEELRGYHKPIMLAGGIGNIRADHVQKGEIVVGAKLIVLGGPAMNIGLGGGAASSMASGQSDADLDFASVQRDNPEMERRCQEVIDRCWQLGDANPILFIHDVGAGGLSNAMPELVSDGGRGGKFELRDILSDEPGMSPLEIWCNESQERYVLAVAADQLPLFDELCKRERAPYAVIGDATEEQHLSLHDNHFDNQPIDLPLDVLLGKTPKMTRDVQTLKAKGDALNRADITIADAVNRVLHLPTVAEKTFLVTIGDRTVTGMVARDQMVGPWQVPVADCAVTTASLDSYYGEAMSIGERAPVALLDFAASARLAVGEALTNIAATQIGDIKRIKLSANWMAAAGHPGEDAGLYDAVKAVGEELCPQLGLTIPVGKDSMSMKTRWQEGNEQREMTSPLSLVISAFARVEDVRHTLTPQLSTEDNALLLIDLGKGHNALGATALAQVYRQLGDKPADVRDVAQLKGFYDAMQVLVAARKLLAWHDRSDGGLLVTLAEMAFAGHCGVQVDIAALGDDHLAALFNEELGGVIQVRAEDRDAVETLLAQYGLADCVHYLGQALAGDRFVITANDRTVFSESRTTLRVWWAETTWQMQRLRDNPQCADQEHEAKANDADPGLNVKLSFDINEDIAAPYIATGARPKVAVLREQGVNSHVEMAAAFHRAGFDAIDVHMSDLLGGRIGLGNFHALVACGGFSYGDVLGAGEGWAKSILFNHRVRDEFETFFHRPQTLALGVCNGCQMMSNLRELIPGSELWPRFVRNHSDRFEARFSLVEVTQSPSLLLQGMVGSQMPIAVSHGEGRVEVRDDAHLAALESKGLVALRYVDNFGKVTETYPANPNGSPNGITAVTTENGRVTIMMPHPERVFRTVANSWHPENWGEDSPWMRIFRNARKQLG.

Residues 305–327 (WPGAATGSGGEIRDEGATGRGAK) form a disordered region. ATP is bound by residues 307-318 (GAATGSGGEIRD), 386-388 (TGY), and Ala678. 4 residues coordinate Mg(2+): Asp679, Glu718, Asn722, and Asp884. Ser886 contributes to the ATP binding site. The 254-residue stretch at 1042 to 1295 (VAVLREQGVN…IFRNARKQLG (254 aa)) folds into the Glutamine amidotransferase type-1 domain. Cys1135 acts as the Nucleophile in catalysis. Residues His1260 and Glu1262 contribute to the active site.

In the N-terminal section; belongs to the FGAMS family. In terms of assembly, monomer.

The protein localises to the cytoplasm. It carries out the reaction N(2)-formyl-N(1)-(5-phospho-beta-D-ribosyl)glycinamide + L-glutamine + ATP + H2O = 2-formamido-N(1)-(5-O-phospho-beta-D-ribosyl)acetamidine + L-glutamate + ADP + phosphate + H(+). It functions in the pathway purine metabolism; IMP biosynthesis via de novo pathway; 5-amino-1-(5-phospho-D-ribosyl)imidazole from N(2)-formyl-N(1)-(5-phospho-D-ribosyl)glycinamide: step 1/2. In terms of biological role, phosphoribosylformylglycinamidine synthase involved in the purines biosynthetic pathway. Catalyzes the ATP-dependent conversion of formylglycinamide ribonucleotide (FGAR) and glutamine to yield formylglycinamidine ribonucleotide (FGAM) and glutamate. This Salmonella typhi protein is Phosphoribosylformylglycinamidine synthase.